A 384-amino-acid polypeptide reads, in one-letter code: Odorant receptor 33c (384 aa).

The Cytoplasmic segment spans residues 1–35 (MVIIDSLSFYRPFWICMRLLVPTFFKDSSRPVQLY). Residues 36 to 56 (VVLLHILVTLWFPLHLLLHLL) form a helical membrane-spanning segment. Over 57–63 (LLPSTAE) the chain is Extracellular. The chain crosses the membrane as a helical span at residues 64–84 (FFKNLTMSLTCVACSLKHVAH). Over 85–128 (LYHLPQIVEIESLIEQLDTFIASEQEHRYYRDHVHCHARRFTRC) the chain is Cytoplasmic. A helical membrane pass occupies residues 129-149 (LYISFGMIYALFLFGVFVQVI). Residues 150–169 (SGNWELLYPAYFPFDLESNR) are Extracellular-facing. A helical transmembrane segment spans residues 170-190 (FLGAVALGYQVFSMLVEGFQG). The Cytoplasmic segment spans residues 191 to 251 (LGNDTYTPLT…LVRFHNLVSR (61 aa)). A helical membrane pass occupies residues 252–272 (TISEVQLVQLGGCGATLCIIV). The Extracellular segment spans residues 273–274 (SY). A helical membrane pass occupies residues 275 to 295 (MLFFVGDTISLVYYLVFFGVV). Over 296-358 (CVQLFPSCYF…WIIKAGGLIE (63 aa)) the chain is Cytoplasmic. Residues 359–379 (LNLNAFFATLKMAYSLFAVVV) form a helical membrane-spanning segment. The Extracellular portion of the chain corresponds to 380-384 (RAKGI).

The protein belongs to the insect chemoreceptor superfamily. Heteromeric odorant receptor channel (TC 1.A.69) family. Or2a subfamily. As to quaternary structure, interacts with Orco. Complexes exist early in the endomembrane system in olfactory sensory neurons (OSNs), coupling these complexes to the conserved ciliary trafficking pathway. As to expression, expressed in the antenna and in a subset of 18 olfactory receptor neurons in the maxillary palp.

Its subcellular location is the cell membrane. Functionally, odorant receptor which mediates acceptance or avoidance behavior, depending on its substrates. The odorant receptor repertoire encodes a large collection of odor stimuli that vary widely in identity, intensity, and duration. May form a complex with Orco to form odorant-sensing units, providing sensitive and prolonged odorant signaling and calcium permeability. This is Odorant receptor 33c (Or33c) from Drosophila melanogaster (Fruit fly).